Reading from the N-terminus, the 1241-residue chain is ATP-dependent helicase/nuclease subunit A (1241 aa).

Residues 12-485 (SQWTDDQWKA…IDLAKNFRSR (474 aa)) form the UvrD-like helicase ATP-binding domain. 33–40 (AAAGSGKT) contacts ATP. The UvrD-like helicase C-terminal domain maps to 505–805 (GEIDYDADAE…RIMTIHKSKG (301 aa)).

This sequence belongs to the helicase family. AddA subfamily. As to quaternary structure, heterodimer of AddA and AddB/RexB. The cofactor is Mg(2+).

The catalysed reaction is Couples ATP hydrolysis with the unwinding of duplex DNA by translocating in the 3'-5' direction.. It carries out the reaction ATP + H2O = ADP + phosphate + H(+). Its function is as follows. The heterodimer acts as both an ATP-dependent DNA helicase and an ATP-dependent, dual-direction single-stranded exonuclease. Recognizes the chi site generating a DNA molecule suitable for the initiation of homologous recombination. The AddA nuclease domain is required for chi fragment generation; this subunit has the helicase and 3' -&gt; 5' nuclease activities. This chain is ATP-dependent helicase/nuclease subunit A, found in Bacillus cereus (strain ATCC 14579 / DSM 31 / CCUG 7414 / JCM 2152 / NBRC 15305 / NCIMB 9373 / NCTC 2599 / NRRL B-3711).